A 663-amino-acid polypeptide reads, in one-letter code: UvrABC system protein B (663 aa).

Residues Asp31 to Glu271 form the Helicase ATP-binding domain. Gly44–Thr51 is a binding site for ATP. Positions Tyr97–Val120 match the Beta-hairpin motif. The Helicase C-terminal domain maps to Gln435–Ile601. Residues Gln627–Ile662 form the UVR domain.

It belongs to the UvrB family. Forms a heterotetramer with UvrA during the search for lesions. Interacts with UvrC in an incision complex.

It localises to the cytoplasm. In terms of biological role, the UvrABC repair system catalyzes the recognition and processing of DNA lesions. A damage recognition complex composed of 2 UvrA and 2 UvrB subunits scans DNA for abnormalities. Upon binding of the UvrA(2)B(2) complex to a putative damaged site, the DNA wraps around one UvrB monomer. DNA wrap is dependent on ATP binding by UvrB and probably causes local melting of the DNA helix, facilitating insertion of UvrB beta-hairpin between the DNA strands. Then UvrB probes one DNA strand for the presence of a lesion. If a lesion is found the UvrA subunits dissociate and the UvrB-DNA preincision complex is formed. This complex is subsequently bound by UvrC and the second UvrB is released. If no lesion is found, the DNA wraps around the other UvrB subunit that will check the other stand for damage. This Streptococcus equi subsp. zooepidemicus (strain MGCS10565) protein is UvrABC system protein B.